The chain runs to 112 residues: DNA-directed RNA polymerases I and III subunit RPAC2 (112 aa).

Belongs to the archaeal Rpo11/eukaryotic RPB11/RPC19 RNA polymerase subunit family. Component of the RNA polymerase I (Pol I) and RNA polymerase III (Pol III) complexes consisting of at least 13 and 17 subunits, respectively.

It localises to the nucleus. In terms of biological role, DNA-dependent RNA polymerase catalyzes the transcription of DNA into RNA using the four ribonucleoside triphosphates as substrates. Common core component of RNA polymerases I and III which synthesize ribosomal RNA precursors and small RNAs, such as 5S rRNA and tRNAs, respectively. The sequence is that of DNA-directed RNA polymerases I and III subunit RPAC2 (polr1d) from Danio rerio (Zebrafish).